Here is a 152-residue protein sequence, read N- to C-terminus: Sec-independent protein translocase protein TatB (152 aa).

A helical transmembrane segment spans residues 1-21 (MFDLGWSELLVIGVVALIVVG).

The protein belongs to the TatB family. The Tat system comprises two distinct complexes: a TatABC complex, containing multiple copies of TatA, TatB and TatC subunits, and a separate TatA complex, containing only TatA subunits. Substrates initially bind to the TatABC complex, which probably triggers association of the separate TatA complex to form the active translocon.

It is found in the cell inner membrane. Part of the twin-arginine translocation (Tat) system that transports large folded proteins containing a characteristic twin-arginine motif in their signal peptide across membranes. Together with TatC, TatB is part of a receptor directly interacting with Tat signal peptides. TatB may form an oligomeric binding site that transiently accommodates folded Tat precursor proteins before their translocation. This is Sec-independent protein translocase protein TatB from Ruegeria pomeroyi (strain ATCC 700808 / DSM 15171 / DSS-3) (Silicibacter pomeroyi).